We begin with the raw amino-acid sequence, 130 residues long: Capsid protein (130 aa).

The segment at 32–105 (EWISSNSRSQ…FATNDDCALI (74 aa)) is viral RNA-binding.

The protein belongs to the Leviviricetes capsid protein family. Homodimer. The capsid proteins form dimers that assemble by group of 5. Twelve such pentamers are linked together with free dimers. The homodimers binds to the viral RNA via an operator hairpin, but also to many other RNA sequences in the viral genome; this interaction probably shifts the virus from the replicative to the assembly phase and ensures specific encapsidation of the viral genome.

It localises to the virion. Functionally, capsid protein self-assembles to form an icosahedral capsid with a T=3 symmetry, about 26 nm in diameter, and consisting of 89 capsid proteins dimers (178 capsid proteins). Involved in viral genome encapsidation through the interaction between a capsid protein dimer and the multiple packaging signals present in the RNA genome. The capsid also contains 1 copy of the A2 maturation protein. Its function is as follows. Acts as a translational repressor of viral replicase synthesis late in infection. This latter function is the result of capsid protein interaction with an RNA hairpin which contains the replicase ribosome-binding site. This Enterobacteria phage fr (Bacteriophage fr) protein is Capsid protein.